A 524-amino-acid chain; its full sequence is Rho guanine nucleotide exchange factor 3 (524 aa).

Phosphoserine occurs at positions 46 and 69. In terms of domain architecture, DH spans Lys-121–Lys-303. Residues Ile-290–Glu-448 form the PH domain. A disordered region spans residues Asp-461–Val-524. Residues Glu-472–Gln-484 show a composition bias toward basic and acidic residues.

As to quaternary structure, interacts with RHOA and RHOB.

It is found in the cytoplasm. Functionally, acts as a guanine nucleotide exchange factor (GEF) for RhoA and RhoB GTPases. In Mus musculus (Mouse), this protein is Rho guanine nucleotide exchange factor 3 (Arhgef3).